The following is a 607-amino-acid chain: Rap1 GTPase-GDP dissociation stimulator 1-A (607 aa).

5 ARM repeats span residues E79–Y118, D170–E211, D347–I390, P391–D431, and S479–A519.

In terms of assembly, interacts with ralB. Probably interacts with the post-translationally isoprenylated (geranyl-geranylation) forms of ral proteins. Interacts with both GDP-bound and GTP-bound forms of ralA, but interaction is much stronger with ralA-GDP. In terms of tissue distribution, weakly expressed in adult tissues with highest levels found in spleen, kidney, skin and A6 cells.

It localises to the cytoplasm. The protein resides in the cytosol. It is found in the endoplasmic reticulum. Its subcellular location is the mitochondrion. In terms of biological role, stimulates GDP/GTP exchange reaction of a group of small GTP-binding proteins (G proteins) including Rap1a/Rap1b, RhoA, RhoB and KRas, by stimulating the dissociation of GDP from and the subsequent binding of GTP to each small G protein. This is Rap1 GTPase-GDP dissociation stimulator 1-A (rap1gds1-a) from Xenopus laevis (African clawed frog).